Here is a 21-residue protein sequence, read N- to C-terminus: FVNTIRLLINKAREWNNKQSS.

A Serine amide modification is found at Ser-21.

As to expression, expressed by the venom gland.

It localises to the secreted. The sequence is that of Cupiennin-6a from Cupiennius salei (American wandering spider).